A 104-amino-acid chain; its full sequence is MATTLYTNKVWCVYILRQDNGKLYTGITSNLNRRIKQHSNKQGAKCLRNATNLRLVYHSASAYDYNTAARMEYNLKRKCSKYFKLRLIKAKPLLLHKFLLANKL.

The GIY-YIG domain occupies 9–89 (KVWCVYILRQ…SKYFKLRLIK (81 aa)).

The protein belongs to the UPF0213 family.

This Autographa californica nuclear polyhedrosis virus (AcMNPV) protein is UPF0213 protein in VLF1-GP41 intergenic region.